Reading from the N-terminus, the 121-residue chain is MIDVLGPEKRRRRTTQEKIAIVQQSFEPGMTVSLVARQHGVAASQLFLWRKQYQEGSLTAVAAGEQVVPASELAAAMKQIKELQRLLGKKTMENELLKEAVEYGRAKKWIAHAPLLPGDGE.

Belongs to the transposase 8 family.

Its function is as follows. Involved in the transposition of the insertion sequence IS2. This Escherichia coli (strain K12) protein is Transposase InsC for insertion element IS2A (insC1).